A 133-amino-acid chain; its full sequence is MAKGPNNAAQRARKKVKKNVADGIAHVHASFNNTIITITDRQGNALSWATAGGQGFKGSRKSTPFAAQVAAENAGRVAQDQGIKNLEVRIKGPGPGRESAVRALNALGIKIAVIEDVTPVPHNGCRPPKRRRI.

It belongs to the universal ribosomal protein uS11 family. In terms of assembly, part of the 30S ribosomal subunit. Interacts with proteins S7 and S18. Binds to IF-3.

Its function is as follows. Located on the platform of the 30S subunit, it bridges several disparate RNA helices of the 16S rRNA. Forms part of the Shine-Dalgarno cleft in the 70S ribosome. The polypeptide is Small ribosomal subunit protein uS11 (Cupriavidus metallidurans (strain ATCC 43123 / DSM 2839 / NBRC 102507 / CH34) (Ralstonia metallidurans)).